The sequence spans 94 residues: Co-chaperonin GroES (94 aa).

As to quaternary structure, heptamer of 7 subunits arranged in a ring. Interacts with the chaperonin GroEL.

The protein localises to the cytoplasm. Functionally, together with the chaperonin GroEL, plays an essential role in assisting protein folding. The GroEL-GroES system forms a nano-cage that allows encapsulation of the non-native substrate proteins and provides a physical environment optimized to promote and accelerate protein folding. GroES binds to the apical surface of the GroEL ring, thereby capping the opening of the GroEL channel. This chain is Co-chaperonin GroES, found in Thermoanaerobacter brockii (Thermoanaerobium brockii).